Consider the following 649-residue polypeptide: Acetyl-coenzyme A synthetase (649 aa).

Residues 189–192 (RGGK), threonine 311, and asparagine 335 contribute to the CoA site. ATP-binding positions include 387–389 (GEP), 411–416 (DTWWQT), aspartate 500, and arginine 515. A CoA-binding site is contributed by serine 523. Arginine 526 serves as a coordination point for ATP. The Mg(2+) site is built by valine 537, histidine 539, and valine 542. Residue arginine 584 coordinates CoA. Residue lysine 609 is modified to N6-acetyllysine.

This sequence belongs to the ATP-dependent AMP-binding enzyme family. Mg(2+) is required as a cofactor. Post-translationally, acetylated. Deacetylation by the SIR2-homolog deacetylase activates the enzyme.

The catalysed reaction is acetate + ATP + CoA = acetyl-CoA + AMP + diphosphate. Its function is as follows. Catalyzes the conversion of acetate into acetyl-CoA (AcCoA), an essential intermediate at the junction of anabolic and catabolic pathways. AcsA undergoes a two-step reaction. In the first half reaction, AcsA combines acetate with ATP to form acetyl-adenylate (AcAMP) intermediate. In the second half reaction, it can then transfer the acetyl group from AcAMP to the sulfhydryl group of CoA, forming the product AcCoA. The sequence is that of Acetyl-coenzyme A synthetase from Rhizobium meliloti (strain 1021) (Ensifer meliloti).